The primary structure comprises 663 residues: UvrABC system protein B (663 aa).

Over residues 1-10 (MIDKRDDKPF) the composition is skewed to basic and acidic residues. The interval 1 to 23 (MIDKRDDKPFKLKSKYKPSGDQP) is disordered. The 241-residue stretch at 31–271 (DNIEGGEKAQ…EQSIAKIQAE (241 aa)) folds into the Helicase ATP-binding domain. An ATP-binding site is contributed by 44 to 51 (GATGTGKT). Positions 97-120 (YYDYYQPEAYVPSSDTYIEKDSSV) match the Beta-hairpin motif. The Helicase C-terminal domain occupies 435–601 (QIDDLLGEIN…TIKKDIRGLI (167 aa)). Positions 627–662 (KEAINALQKQMQEAAELLDFELAAQMRDLILELKLM) constitute a UVR domain.

Belongs to the UvrB family. As to quaternary structure, forms a heterotetramer with UvrA during the search for lesions. Interacts with UvrC in an incision complex.

Its subcellular location is the cytoplasm. Functionally, the UvrABC repair system catalyzes the recognition and processing of DNA lesions. A damage recognition complex composed of 2 UvrA and 2 UvrB subunits scans DNA for abnormalities. Upon binding of the UvrA(2)B(2) complex to a putative damaged site, the DNA wraps around one UvrB monomer. DNA wrap is dependent on ATP binding by UvrB and probably causes local melting of the DNA helix, facilitating insertion of UvrB beta-hairpin between the DNA strands. Then UvrB probes one DNA strand for the presence of a lesion. If a lesion is found the UvrA subunits dissociate and the UvrB-DNA preincision complex is formed. This complex is subsequently bound by UvrC and the second UvrB is released. If no lesion is found, the DNA wraps around the other UvrB subunit that will check the other stand for damage. This is UvrABC system protein B from Streptococcus pyogenes serotype M5 (strain Manfredo).